The following is a 150-amino-acid chain: Propanediol utilization protein PduV (150 aa).

The targets protein to the BMC stretch occupies residues 1–42 (MKRIMLIGPSQCGKTSLTQCMRGEALHYQKTQAIVWSPTTID). A GTP-binding site is contributed by 8 to 15 (GPSQCGKT).

Belongs to the EutP/PduV family. In terms of assembly, interacts with PduU, probably via the PduU beta-barrel which is predicted by modeling to be on the exterior of the BMC.

The protein localises to the bacterial microcompartment. The protein operates within polyol metabolism; 1,2-propanediol degradation. Its function is as follows. May play a role in the spatial distribution of the bacterial microcompartment (BMC) dedicated to 1,2-PD degradation, perhaps being involved in cytoskeleton dynamics; might bind GTP. This subunit is directly targeted to the BMC. Expression of a cosmid containing the full 21-gene pdu operon in E.coli allows E.coli to grow on 1,2-propanediol (1,2-PD) with the appearance of bacterial microcompartments (BMC) in its cytoplasm. In terms of biological role, the 1,2-PD-specific bacterial microcompartment (BMC) concentrates low levels of 1,2-PD catabolic enzymes, concentrates volatile reaction intermediates thus enhancing pathway flux and keeps the level of toxic, mutagenic propionaldehyde low. The chain is Propanediol utilization protein PduV from Citrobacter freundii.